The primary structure comprises 205 residues: Deoxyuridine 5'-triphosphate nucleotidohydrolase (205 aa).

Position 54 is a phosphoserine (serine 54). Substrate contacts are provided by residues 126–128 (RSG), 140–143 (GVID), glycine 151, and 199–200 (FG).

This sequence belongs to the dUTPase family. As to quaternary structure, homotrimer. Mg(2+) serves as cofactor. In terms of tissue distribution, expressed in all tissues examined. Higher levels in heart and kidney.

It is found in the cytoplasm. It localises to the nucleus. The catalysed reaction is dUTP + H2O = dUMP + diphosphate + H(+). It functions in the pathway pyrimidine metabolism; dUMP biosynthesis; dUMP from dCTP (dUTP route): step 2/2. Catalyzes the cleavage of 2'-deoxyuridine 5'-triphosphate (dUTP) into 2'-deoxyuridine 5'-monophosphate (dUMP) and inorganic pyrophosphate and through its action efficiently prevents uracil misincorporation into DNA and at the same time provides dUMP, the substrate for de novo thymidylate biosynthesis. Inhibits peroxisome proliferator-activated receptor (PPAR) activity by binding of its N-terminal to PPAR, preventing the latter's dimerization with retinoid X receptor. Essential for embryonic development. The protein is Deoxyuridine 5'-triphosphate nucleotidohydrolase (Dut) of Rattus norvegicus (Rat).